Reading from the N-terminus, the 767-residue chain is MAKQLLLLLLLFIVHGVESAPPPHSCDPSNPTTKLYQFCRTDLPIGKRARDLVSRLTIDEKISQLVNTAPGIPRLGVPAYEWWSEALHGVAYAGPGIRFNGTVKAATSFPQVILTAASFDSYEWFRIAQVIGKEARGVYNAGQANGMTFWAPNINIFRDPRWGRGQETPGEDPMMTGTYAVAYVRGLQGDSFDGRKTLSNHLQASACCKHFTAYDLDRWKGITRYVFNAQVSLADLAETYQPPFKKCIEEGRASGIMCAYNRVNGIPSCADPNLLTRTARGQWAFRGYITSDCDAVSIIYDAQGYAKSPEDAVADVLKAGMDVNCGSYLQKHTKSALQQKKVSETDIDRALLNLFSVRIRLGLFNGDPTKLPYGNISPNEVCSPAHQALALDAARNGIVLLKNNLKLLPFSKRSVSSLAVIGPNAHVVKTLLGNYAGPPCKTVTPLDALRSYVKNAVYHQGCDSVACSNAAIDQAVAIAKNADHVVLIMGLDQTQEKEDFDRVDLSLPGKQQELITSVANAAKKPVVLVLICGGPVDISFAANNNKIGSIIWAGYPGEAGGIAISEIIFGDHNPGGRLPVTWYPQSFVNIQMTDMRMRSATGYPGRTYKFYKGPKVYEFGHGLSYSAYSYRFKTLAETNLYLNQSKAQTNSDSVRYTLVSEMGKEGCDVAKTKVTVEVENQGEMAGKHPVLMFARHERGGEDGKRAEKQLVGFKSIVLSNGEKAEMEFEIGLCEHLSRANEFGVMVLEEGKYFLTVGDSELPLIVNV.

An N-terminal signal peptide occupies residues 1 to 19 (MAKQLLLLLLLFIVHGVES). Residue N100 is glycosylated (N-linked (GlcNAc...) asparagine). D292 is a catalytic residue. N643 is a glycosylation site (N-linked (GlcNAc...) asparagine).

It belongs to the glycosyl hydrolase 3 family.

It is found in the secreted. The protein resides in the extracellular space. Its subcellular location is the extracellular matrix. The polypeptide is Probable beta-D-xylosidase 7 (BXL7) (Arabidopsis thaliana (Mouse-ear cress)).